A 231-amino-acid chain; its full sequence is 7-cyano-7-deazaguanine synthase (231 aa).

Phe-8–Leu-18 contributes to the ATP binding site. Zn(2+)-binding residues include Cys-188, Cys-197, Cys-200, and Cys-203.

This sequence belongs to the QueC family. The cofactor is Zn(2+).

It catalyses the reaction 7-carboxy-7-deazaguanine + NH4(+) + ATP = 7-cyano-7-deazaguanine + ADP + phosphate + H2O + H(+). It participates in purine metabolism; 7-cyano-7-deazaguanine biosynthesis. Catalyzes the ATP-dependent conversion of 7-carboxy-7-deazaguanine (CDG) to 7-cyano-7-deazaguanine (preQ(0)). The protein is 7-cyano-7-deazaguanine synthase of Shigella flexneri serotype 5b (strain 8401).